Reading from the N-terminus, the 201-residue chain is Probable nicotinate-nucleotide adenylyltransferase (201 aa).

The protein belongs to the NadD family.

It catalyses the reaction nicotinate beta-D-ribonucleotide + ATP + H(+) = deamido-NAD(+) + diphosphate. It participates in cofactor biosynthesis; NAD(+) biosynthesis; deamido-NAD(+) from nicotinate D-ribonucleotide: step 1/1. Its function is as follows. Catalyzes the reversible adenylation of nicotinate mononucleotide (NaMN) to nicotinic acid adenine dinucleotide (NaAD). The chain is Probable nicotinate-nucleotide adenylyltransferase from Neisseria meningitidis serogroup C / serotype 2a (strain ATCC 700532 / DSM 15464 / FAM18).